The following is a 101-amino-acid chain: UPF0235 protein Mevan_0378 (101 aa).

Belongs to the UPF0235 family.

The polypeptide is UPF0235 protein Mevan_0378 (Methanococcus vannielii (strain ATCC 35089 / DSM 1224 / JCM 13029 / OCM 148 / SB)).